A 164-amino-acid chain; its full sequence is MLIMGVDPGTAITGYGIVEYAGNRFALVECGCIRTMPGVPPAERLQALYGELVEIIKRHRPEHFAVEEIFFNKNTRTALTVGQARGVTVLAAAQSGLPVFEYTPLQVKQAVAGFGRAGKTQVQYMVKTILALPEVPAPDDVADALAVAICHAHHYTWERKLKLK.

Active-site residues include Asp-7, Glu-67, and Asp-140. Positions 7, 67, and 140 each coordinate Mg(2+).

Belongs to the RuvC family. As to quaternary structure, homodimer which binds Holliday junction (HJ) DNA. The HJ becomes 2-fold symmetrical on binding to RuvC with unstacked arms; it has a different conformation from HJ DNA in complex with RuvA. In the full resolvosome a probable DNA-RuvA(4)-RuvB(12)-RuvC(2) complex forms which resolves the HJ. The cofactor is Mg(2+).

It is found in the cytoplasm. The enzyme catalyses Endonucleolytic cleavage at a junction such as a reciprocal single-stranded crossover between two homologous DNA duplexes (Holliday junction).. Functionally, the RuvA-RuvB-RuvC complex processes Holliday junction (HJ) DNA during genetic recombination and DNA repair. Endonuclease that resolves HJ intermediates. Cleaves cruciform DNA by making single-stranded nicks across the HJ at symmetrical positions within the homologous arms, yielding a 5'-phosphate and a 3'-hydroxyl group; requires a central core of homology in the junction. The consensus cleavage sequence is 5'-(A/T)TT(C/G)-3'. Cleavage occurs on the 3'-side of the TT dinucleotide at the point of strand exchange. HJ branch migration catalyzed by RuvA-RuvB allows RuvC to scan DNA until it finds its consensus sequence, where it cleaves and resolves the cruciform DNA. The chain is Crossover junction endodeoxyribonuclease RuvC from Pelotomaculum thermopropionicum (strain DSM 13744 / JCM 10971 / SI).